A 372-amino-acid polypeptide reads, in one-letter code: Aminomethyltransferase (372 aa).

It belongs to the GcvT family. In terms of assembly, the glycine cleavage system is composed of four proteins: P, T, L and H.

The enzyme catalyses N(6)-[(R)-S(8)-aminomethyldihydrolipoyl]-L-lysyl-[protein] + (6S)-5,6,7,8-tetrahydrofolate = N(6)-[(R)-dihydrolipoyl]-L-lysyl-[protein] + (6R)-5,10-methylene-5,6,7,8-tetrahydrofolate + NH4(+). In terms of biological role, the glycine cleavage system catalyzes the degradation of glycine. This is Aminomethyltransferase from Prochlorococcus marinus (strain NATL1A).